A 204-amino-acid polypeptide reads, in one-letter code: MVDFILNAQVRSDLGKGASRRLRRNAGLVPAVVYGGDKEPQSVTLELREIAKLLENEAAFSHVIALNVGGAKETVLIKALQRHPAKGFVMHADFLRVVADHKLTAHVPLHFINEEVAVGVKQSGGEISHTISEVEVSCLPKDLPEFIEVDMAKVELGQIVHLSDLKAPKGVELVQLAHGNDLAVANIHASRVVKEEGSEEGAAE.

Residue S123 is modified to Phosphoserine.

The protein belongs to the bacterial ribosomal protein bL25 family. CTC subfamily. In terms of assembly, part of the 50S ribosomal subunit; part of the 5S rRNA/L5/L18/L25 subcomplex. Contacts the 5S rRNA. Binds to the 5S rRNA independently of L5 and L18.

In terms of biological role, this is one of the proteins that binds to the 5S RNA in the ribosome where it forms part of the central protuberance. This Pseudomonas aeruginosa (strain UCBPP-PA14) protein is Large ribosomal subunit protein bL25.